A 267-amino-acid chain; its full sequence is Distal basal body ring component protein (267 aa).

The first 29 residues, 1–29 (MKAFLFAAAATLVITALSAPAFAGTPVTL), serve as a signal peptide directing secretion.

FlaD is a subunit of the flagellar transenvelope basal body.

The protein localises to the periplasm. Its subcellular location is the bacterial flagellum basal body. Functionally, flaD might be the structural protein of the distal basal body ring P, or it is necessary for the assembly of the P ring. The chain is Distal basal body ring component protein (flaD) from Caulobacter vibrioides (strain ATCC 19089 / CIP 103742 / CB 15) (Caulobacter crescentus).